The primary structure comprises 426 residues: Histidine--tRNA ligase (426 aa).

This sequence belongs to the class-II aminoacyl-tRNA synthetase family. In terms of assembly, homodimer.

Its subcellular location is the cytoplasm. It catalyses the reaction tRNA(His) + L-histidine + ATP = L-histidyl-tRNA(His) + AMP + diphosphate + H(+). The protein is Histidine--tRNA ligase of Streptococcus pyogenes serotype M6 (strain ATCC BAA-946 / MGAS10394).